The following is a 455-amino-acid chain: Phosphoglucosamine mutase (455 aa).

The active-site Phosphoserine intermediate is Ser102. Residues Ser102, Asp241, Asp243, and Asp245 each contribute to the Mg(2+) site. Ser102 bears the Phosphoserine mark.

This sequence belongs to the phosphohexose mutase family. Requires Mg(2+) as cofactor. Activated by phosphorylation.

It carries out the reaction alpha-D-glucosamine 1-phosphate = D-glucosamine 6-phosphate. Its function is as follows. Catalyzes the conversion of glucosamine-6-phosphate to glucosamine-1-phosphate. This is Phosphoglucosamine mutase from Legionella pneumophila (strain Lens).